The primary structure comprises 230 residues: Transmembrane ascorbate ferrireductase 2 (230 aa).

Transmembrane regions (helical) follow at residues 5–25 and 50–70; these read VLGG…IAAL and VHPV…MLAY. Residues 14-218 form the Cytochrome b561 domain; sequence VVRVLGFIIA…LGGFVILGVV (205 aa). His-51 is a binding site for heme b. L-ascorbate is bound by residues Lys-77 and Lys-81. The chain crosses the membrane as a helical span at residues 82–102; it reads LVHLTLQLTAFILSLIGVWAA. His-84 provides a ligand contact to heme b. Phe-105, His-106, and Tyr-115 together coordinate monodehydro-L-ascorbate radical. His-118 contributes to the heme b binding site. A helical transmembrane segment spans residues 120 to 140; sequence WLGLACLFLFAFQWAAGFVTY. L-ascorbate is bound by residues Tyr-140, Arg-150, and Ala-151. His-157 lines the heme b pocket. Residues 157–177 traverse the membrane as a helical segment; that stretch reads HVFLGISIYALALVTATTGIL. 2 residues coordinate monodehydro-L-ascorbate radical: Phe-182 and Asn-186. The helical transmembrane segment at 198–218 threads the bilayer; the sequence is LVNTMGVLILILGGFVILGVV.

Homodimer. The cofactor is heme b. Expressed in roots, seedlings, leaves and flowers. Expressed in the L1 layer of the shoot apex, in the epidermis of leaf primordia and young leaves and in vascular bundles. In the differentiation zone of the root, detected in the pericycle and in the epidermis, but not in the cortex. Strongly expressed in the cortical region of the root tip, in the meristematic tissue and in the epidermal cell layer of lateral roots, but not in the root caps. Highly expressed in unfertilized ovules. In mature embryos, expressed in the epidermis, cotyledon tips and root tips.

It is found in the membrane. The enzyme catalyses Fe(3+)(out) + L-ascorbate(in) = monodehydro-L-ascorbate radical(in) + Fe(2+)(out) + H(+). Its function is as follows. Two-heme-containing cytochrome. Catalyzes ascorbate-dependent transmembrane ferric-chelate reduction. This chain is Transmembrane ascorbate ferrireductase 2 (CYB561B), found in Arabidopsis thaliana (Mouse-ear cress).